We begin with the raw amino-acid sequence, 766 residues long: Protein sak1 (766 aa).

Residues 101-176 (GICWLKRACE…YHYCGIKLRG (76 aa)) constitute a DNA-binding region (RFX-type winged-helix). Ser223, Ser224, and Ser227 each carry phosphoserine. 2 disordered regions span residues 271 to 308 (PQAH…QPTY) and 708 to 731 (LQEH…QQQQ). Positions 279–289 (HLSQSNVPPQL) are enriched in polar residues. Composition is skewed to low complexity over residues 290–308 (SHSS…QPTY) and 715–731 (QQHF…QQQQ).

This sequence belongs to the RFX family.

It localises to the nucleus. Its function is as follows. Positively regulates cyclic AMP-dependent protein kinase-mediated exit from the mitotic cell cycle. The polypeptide is Protein sak1 (sak1) (Schizosaccharomyces pombe (strain 972 / ATCC 24843) (Fission yeast)).